Consider the following 526-residue polypeptide: Glucose-6-phosphate isomerase (526 aa).

E320 functions as the Proton donor in the catalytic mechanism. Residues H349 and K453 contribute to the active site.

The protein belongs to the GPI family.

The protein resides in the cytoplasm. It carries out the reaction alpha-D-glucose 6-phosphate = beta-D-fructose 6-phosphate. It functions in the pathway carbohydrate biosynthesis; gluconeogenesis. The protein operates within carbohydrate degradation; glycolysis; D-glyceraldehyde 3-phosphate and glycerone phosphate from D-glucose: step 2/4. Catalyzes the reversible isomerization of glucose-6-phosphate to fructose-6-phosphate. The polypeptide is Glucose-6-phosphate isomerase (Gloeothece citriformis (strain PCC 7424) (Cyanothece sp. (strain PCC 7424))).